We begin with the raw amino-acid sequence, 276 residues long: Putative respiratory nitrate reductase heme subunit ORF7 (276 aa).

Positions 138 and 228 each coordinate heme b.

As to quaternary structure, probable multiprotein complex; a catalytic heterodimer of an alpha and beta chain is proposed to associate with additional subunits involved in membrane attachment and electron transfer. Requires heme b as cofactor.

Its subcellular location is the cell membrane. Functionally, the respiratory membrane-bound nitrate reductase enzyme complex plays a role in generation of metabolic energy by using nitrate as a terminal electron acceptor during anaerobic conditions. May transfer electrons to the iron-sulfur centers of the catalytic beta subunit. The chain is Putative respiratory nitrate reductase heme subunit ORF7 from Haloferax mediterranei (strain ATCC 33500 / DSM 1411 / JCM 8866 / NBRC 14739 / NCIMB 2177 / R-4) (Halobacterium mediterranei).